A 222-amino-acid polypeptide reads, in one-letter code: Protein-L-isoaspartate O-methyltransferase (222 aa).

S72 is a catalytic residue.

The protein belongs to the methyltransferase superfamily. L-isoaspartyl/D-aspartyl protein methyltransferase family.

The protein localises to the cytoplasm. It carries out the reaction [protein]-L-isoaspartate + S-adenosyl-L-methionine = [protein]-L-isoaspartate alpha-methyl ester + S-adenosyl-L-homocysteine. In terms of biological role, catalyzes the methyl esterification of L-isoaspartyl residues in peptides and proteins that result from spontaneous decomposition of normal L-aspartyl and L-asparaginyl residues. It plays a role in the repair and/or degradation of damaged proteins. This is Protein-L-isoaspartate O-methyltransferase from Picosynechococcus sp. (strain ATCC 27264 / PCC 7002 / PR-6) (Agmenellum quadruplicatum).